The following is a 568-amino-acid chain: 3-(3-hydroxy-phenyl)propionate/3-hydroxycinnamic acid hydroxylase (568 aa).

Residues 13-42 (DVVI…IVEE) and 278-288 (FRKGRMFLAGD) each bind FAD.

The protein belongs to the PheA/TfdB FAD monooxygenase family. It depends on FAD as a cofactor.

It carries out the reaction 3-(3-hydroxyphenyl)propanoate + NADH + O2 + H(+) = 3-(2,3-dihydroxyphenyl)propanoate + NAD(+) + H2O. It catalyses the reaction (2E)-3-(3-hydroxyphenyl)prop-2-enoate + NADH + O2 + H(+) = (2E)-3-(2,3-dihydroxyphenyl)prop-2-enoate + NAD(+) + H2O. Its pathway is aromatic compound metabolism; 3-phenylpropanoate degradation. Its function is as follows. Catalyzes the insertion of one atom of molecular oxygen into position 2 of the phenyl ring of 3-(3-hydroxyphenyl)propionate (3-HPP) and hydroxycinnamic acid (3HCI). This chain is 3-(3-hydroxy-phenyl)propionate/3-hydroxycinnamic acid hydroxylase, found in Mycobacterium sp. (strain JLS).